The primary structure comprises 174 residues: Interleukin-1 receptor antagonist protein (174 aa).

The first 23 residues, methionine 1–cysteine 23, serve as a signal peptide directing secretion. An intrachain disulfide couples cysteine 89 to cysteine 139. The N-linked (GlcNAc...) asparagine glycan is linked to asparagine 107.

This sequence belongs to the IL-1 family.

It is found in the secreted. In terms of biological role, anti-inflammatory antagonist of interleukin-1 family of proinflammatory cytokines such as interleukin-1beta/IL1B and interleukin-1alpha/IL1A. Protects from immune dysregulation and uncontrolled systemic inflammation triggered by IL1 for a range of innate stimulatory agents such as pathogens. This chain is Interleukin-1 receptor antagonist protein (IL1RN), found in Bos taurus (Bovine).